A 568-amino-acid chain; its full sequence is Kelch-like protein 12 (568 aa).

The BTB domain maps to 33–100 (CDVTLRVEQK…VYTETVHVTV (68 aa)). One can recognise a BACK domain in the interval 135-236 (CLGIRDFAET…LTPRYITDVI (102 aa)). Kelch repeat units follow at residues 282–329 (VLLV…SLHD), 331–379 (IYVI…TLGD), 380–426 (MIYV…VASG), 427–473 (VIYC…LLND), 475–520 (IYVV…VLRG), and 522–567 (LYAI…VLRE). Residues 405–568 (QWSMLGDMQT…DAGVCVLREK (164 aa)) form an interaction with DVL3 region.

Component of the BCR(KLHL12) E3 ubiquitin ligase complex, at least composed of CUL3 and KLHL12 and RBX1. This complex interacts with DVL3 upon activation of the Wnt signaling pathway by WNT3A. Interacts with DRD4, KLHL2 and SEC31A. Interacts with PEF1 and PDCD6/ALG-2; interaction takes place in response to cytosolic calcium increase and leads to bridge together the BCR(KLHL12) complex and SEC31 (SEC31A or SEC31B). In terms of processing, ubiquitinated by the SCF(FBXL17) complex, leading to its degradation by the proteasome: ubiquitination by the SCF(FBXL17) complex takes place when aberrant BTB domain dimers are formed. As to expression, ubiquitously expressed. Highly expressed in testis and at lower levels in the submandibular salivary gland.

The protein resides in the cytoplasmic vesicle. The protein localises to the COPII-coated vesicle. The protein operates within protein modification; protein ubiquitination. Functionally, substrate-specific adapter of a BCR (BTB-CUL3-RBX1) E3 ubiquitin ligase complex that acts as a negative regulator of Wnt signaling pathway and ER-Golgi transport. The BCR(KLHL12) complex is involved in ER-Golgi transport by regulating the size of COPII coats, thereby playing a key role in collagen export, which is required for embryonic stem (ES) cells division: BCR(KLHL12) acts by mediating monoubiquitination of SEC31 (SEC31A or SEC31B). The BCR(KLHL12) complex is also involved in neural crest specification: in response to cytosolic calcium increase, interacts with the heterodimer formed with PEF1 and PDCD6/ALG-2, leading to bridge together the BCR(KLHL12) complex and SEC31 (SEC31A or SEC31B), promoting monoubiquitination of SEC31 and subsequent collagen export. As part of the BCR(KLHL12) complex, also acts as a negative regulator of the Wnt signaling pathway by mediating ubiquitination and subsequent proteolysis of DVL3. The BCR(KLHL12) complex also mediates polyubiquitination of DRD4 and PEF1, without leading to degradation of these proteins. The chain is Kelch-like protein 12 (KLHL12) from Homo sapiens (Human).